A 358-amino-acid chain; its full sequence is Probable G-protein coupled receptor 25 (358 aa).

The Extracellular segment spans residues 1-43 (MQSTEPWSPSWGTLSWDYSGSGSLDQVELCPAWNLPYGHAIIP). The chain crosses the membrane as a helical span at residues 44–64 (ALYLAAFAVGLPGNAFVVWLL). The Cytoplasmic portion of the chain corresponds to 65 to 76 (SRQRGPRRLVDT). Residues 77–97 (FVLHLAAADLGFVLTLPLWAA) traverse the membrane as a helical segment. At 98 to 113 (AEARGGLWPFGDGLCK) the chain is on the extracellular side. Cys-112 and Cys-191 are joined by a disulfide. A helical membrane pass occupies residues 114-134 (VSSFALAVTRCAGALLLAGMS). The Cytoplasmic segment spans residues 135–155 (VDRYLAVGRPLSARPLRSARC). A helical transmembrane segment spans residues 156 to 176 (VRAVCGAAWAAAFLAGLPALL). The Extracellular portion of the chain corresponds to 177-200 (YRGLQPSLDGVGSQCAEEPWEALQ). Residues 201 to 221 (GVGLLLLLLTFALPLAVTLIC) traverse the membrane as a helical segment. Topologically, residues 222 to 239 (YWRVSRRLPRVGRARSNS) are cytoplasmic. The chain crosses the membrane as a helical span at residues 240–260 (LRIIFTVESVFVGCWLPFGVL). Over 261-284 (RSLFHLARLQALPLPCSLLLALRW) the chain is Extracellular. The helical transmembrane segment at 285 to 307 (GLTVTTCLAFVNSSANPVIYLLL) threads the bilayer. Residues 308-358 (DRSFRARARFGLCARAGRQVRRISSASSLSRDDSSVFRGRSPKVNSASATW) are Cytoplasmic-facing. The interval 339–358 (DDSSVFRGRSPKVNSASATW) is disordered.

It belongs to the G-protein coupled receptor 1 family.

The protein resides in the membrane. Functionally, orphan receptor. This chain is Probable G-protein coupled receptor 25 (Gpr25), found in Mus musculus (Mouse).